Reading from the N-terminus, the 475-residue chain is BTB/POZ domain-containing protein 10 (475 aa).

The interval 1 to 143 is disordered; the sequence is MAGRPHPYDG…SSQSSSDGSC (143 aa). A compositionally biased stretch (basic residues) spans 22 to 31; that stretch reads LHSRPRKLYK. Over residues 57–80 the composition is skewed to basic and acidic residues; it reads GHERSRDRRRSSDRSRDSSHERTE. Over residues 81-94 the composition is skewed to polar residues; sequence SQLTPCIRNVTSPT. Basic and acidic residues predominate over residues 97-107; the sequence is HHVEREKDHSS. The span at 108-142 shows a compositional bias: low complexity; the sequence is SRPSSPRPQKASPNGSISSAGNSSRNSSQSSSDGS. Residues 146 to 475 are interaction with AKT family members; sequence AGEMVFVYEN…LDPDAQNPTL (330 aa). The region spanning 167-241 is the BTB domain; sequence ERVTLIVDNT…YKTGIIRCPD (75 aa). Positions 456–475 are disordered; it reads PIHPPSGNSDLDPDAQNPTL.

Interacts (via C-terminal 330-amino-acid region) with AKT1; AKT2 and AKT3. Interacts with PPP2CA and PPP1CA.

The protein resides in the nucleus. It localises to the cytoplasm. Its function is as follows. Plays a major role as an activator of AKT family members by inhibiting PPP2CA-mediated dephosphorylation, thereby keeping AKTs activated. Plays a role in preventing motor neuronal death and in accelerating the growth of pancreatic beta cells. The polypeptide is BTB/POZ domain-containing protein 10 (BTBD10) (Pongo abelii (Sumatran orangutan)).